A 314-amino-acid polypeptide reads, in one-letter code: Serine protease 46 (314 aa).

Positions 44–281 constitute a Peptidase S1 domain; sequence VVNGKAVEVG…FTQWIKRQIG (238 aa). A disulfide bridge connects residues Cys69 and Cys85. Catalysis depends on charge relay system residues His84 and Asp130. 3 disulfide bridges follow: Cys164–Cys239, Cys197–Cys219, and Cys229–Cys257. Residue Ser233 is the Charge relay system of the active site. Residues 293–313 form a helical membrane-spanning segment; sequence FLSPFILTGYILLVSLGSLWL.

The protein belongs to the peptidase S1 family.

The protein resides in the membrane. This Mus musculus (Mouse) protein is Serine protease 46 (Prss46).